A 112-amino-acid chain; its full sequence is UPF0060 membrane protein IL2332 (112 aa).

A run of 4 helical transmembrane segments spans residues Leu10–Trp30, Ser36–Leu56, Val64–Glu84, and Thr90–Trp110.

This sequence belongs to the UPF0060 family.

It localises to the cell inner membrane. The polypeptide is UPF0060 membrane protein IL2332 (Idiomarina loihiensis (strain ATCC BAA-735 / DSM 15497 / L2-TR)).